Reading from the N-terminus, the 315-residue chain is MALYHLFSHPIERAYRAGLCSKAALFLLLTTALTYIPPLLVAFRSHGFWLKRSSYEEQPNVRFQHQVLLVALLGPEPEAFLAWSTFPTFNRLQGAHLRVPLVSSREEDRNQDGKMDVLYFKLELPLQPTEHVLGVQLILTFSYQLHRMSTFEMQSMAFLQSSFAVPGSQLYVNGDLRLQQKQPLSYRGLDIRYNVSVINGTSPFAQDYDLTHIVAAYQERNVTTVLSDPNPIWLVGRAAEAPFVIHAVIRYPTEVISYQPGFWEMIKFAWIQYVSILLIFLWVFERIKIFVFQNQVVTSIPVAVPQGEIRKEHLS.

The helical transmembrane segment at Ala-23–Phe-43 threads the bilayer. N-linked (GlcNAc...) asparagine glycans are attached at residues Asn-194, Asn-199, and Asn-221. A helical transmembrane segment spans residues Phe-262–Trp-282.

This sequence belongs to the TMEM231 family. In terms of assembly, part of the tectonic-like complex (also named B9 complex). Interacts with TMEM107.

It localises to the cell projection. It is found in the cilium membrane. In terms of biological role, transmembrane component of the tectonic-like complex, a complex localized at the transition zone of primary cilia and acting as a barrier that prevents diffusion of transmembrane proteins between the cilia and plasma membranes. Required for ciliogenesis and sonic hedgehog/SHH signaling. This Mus musculus (Mouse) protein is Transmembrane protein 231 (Tmem231).